The sequence spans 150 residues: SsrA-binding protein (150 aa).

The protein belongs to the SmpB family.

Its subcellular location is the cytoplasm. Required for rescue of stalled ribosomes mediated by trans-translation. Binds to transfer-messenger RNA (tmRNA), required for stable association of tmRNA with ribosomes. tmRNA and SmpB together mimic tRNA shape, replacing the anticodon stem-loop with SmpB. tmRNA is encoded by the ssrA gene; the 2 termini fold to resemble tRNA(Ala) and it encodes a 'tag peptide', a short internal open reading frame. During trans-translation Ala-aminoacylated tmRNA acts like a tRNA, entering the A-site of stalled ribosomes, displacing the stalled mRNA. The ribosome then switches to translate the ORF on the tmRNA; the nascent peptide is terminated with the 'tag peptide' encoded by the tmRNA and targeted for degradation. The ribosome is freed to recommence translation, which seems to be the essential function of trans-translation. This is SsrA-binding protein from Borreliella burgdorferi (strain ATCC 35210 / DSM 4680 / CIP 102532 / B31) (Borrelia burgdorferi).